A 142-amino-acid polypeptide reads, in one-letter code: MKTYLAKPNEVPKKWYVIDATGKPLGRLAAKIAVILRGKHKPQFTPNVDTGDYVIVINAEKVVLTGKKLDKDGYRYHTKYPGGLKFIPYRRLLEKHPEKAIEIAVRGMLPKNRLRDRFMRKLKVYRGPNHPHAAQKPEVLEI.

This sequence belongs to the universal ribosomal protein uL13 family. Part of the 50S ribosomal subunit.

Its function is as follows. This protein is one of the early assembly proteins of the 50S ribosomal subunit, although it is not seen to bind rRNA by itself. It is important during the early stages of 50S assembly. The polypeptide is Large ribosomal subunit protein uL13 (Caldicellulosiruptor bescii (strain ATCC BAA-1888 / DSM 6725 / KCTC 15123 / Z-1320) (Anaerocellum thermophilum)).